Reading from the N-terminus, the 156-residue chain is ATP synthase subunit b (156 aa).

Residues 7-29 (LIGQLIAFALFTWFCVKFVWPPI) traverse the membrane as a helical segment.

It belongs to the ATPase B chain family. As to quaternary structure, F-type ATPases have 2 components, F(1) - the catalytic core - and F(0) - the membrane proton channel. F(1) has five subunits: alpha(3), beta(3), gamma(1), delta(1), epsilon(1). F(0) has three main subunits: a(1), b(2) and c(10-14). The alpha and beta chains form an alternating ring which encloses part of the gamma chain. F(1) is attached to F(0) by a central stalk formed by the gamma and epsilon chains, while a peripheral stalk is formed by the delta and b chains.

The protein localises to the cell inner membrane. F(1)F(0) ATP synthase produces ATP from ADP in the presence of a proton or sodium gradient. F-type ATPases consist of two structural domains, F(1) containing the extramembraneous catalytic core and F(0) containing the membrane proton channel, linked together by a central stalk and a peripheral stalk. During catalysis, ATP synthesis in the catalytic domain of F(1) is coupled via a rotary mechanism of the central stalk subunits to proton translocation. Functionally, component of the F(0) channel, it forms part of the peripheral stalk, linking F(1) to F(0). In Mannheimia succiniciproducens (strain KCTC 0769BP / MBEL55E), this protein is ATP synthase subunit b.